Consider the following 147-residue polypeptide: Sec-independent protein translocase protein TatB (147 aa).

A helical transmembrane segment spans residues phenylalanine 2–glycine 22. The span at glutamine 85–tyrosine 97 shows a compositional bias: polar residues. The segment at glutamine 85 to glycine 147 is disordered. The segment covering alanine 113–serine 133 has biased composition (low complexity).

This sequence belongs to the TatB family. The Tat system comprises two distinct complexes: a TatABC complex, containing multiple copies of TatA, TatB and TatC subunits, and a separate TatA complex, containing only TatA subunits. Substrates initially bind to the TatABC complex, which probably triggers association of the separate TatA complex to form the active translocon.

The protein localises to the cell inner membrane. In terms of biological role, part of the twin-arginine translocation (Tat) system that transports large folded proteins containing a characteristic twin-arginine motif in their signal peptide across membranes. Together with TatC, TatB is part of a receptor directly interacting with Tat signal peptides. TatB may form an oligomeric binding site that transiently accommodates folded Tat precursor proteins before their translocation. The chain is Sec-independent protein translocase protein TatB from Shewanella sp. (strain ANA-3).